The primary structure comprises 307 residues: Transposase InsD for insertion element IS2-9 (307 aa).

The Integrase catalytic domain occupies 112 to 295; sequence KPAVPPSKRA…SPREYLRQRA (184 aa).

In terms of biological role, involved in the transposition of the insertion sequence IS2. The protein is Transposase InsD for insertion element IS2-9 of Escherichia coli (strain K12).